Here is a 335-residue protein sequence, read N- to C-terminus: Avermitilol synthase (335 aa).

Mg(2+) is bound by residues D80, D84, N219, S223, and E227. The DDXXD motif signature appears at 80–84; it reads DDQFD.

The protein belongs to the terpene synthase family. Mg(2+) is required as a cofactor.

The enzyme catalyses (2E,6E)-farnesyl diphosphate + H2O = avermitilol + diphosphate. Its function is as follows. Catalyzes the cyclization of farnesyl diphosphate to avermitilol. The chain is Avermitilol synthase (tpc1) from Streptomyces avermitilis (strain ATCC 31267 / DSM 46492 / JCM 5070 / NBRC 14893 / NCIMB 12804 / NRRL 8165 / MA-4680).